An 859-amino-acid chain; its full sequence is Active breakpoint cluster region-related protein (859 aa).

The tract at residues 27 to 84 (DDYDAEGNEEQKGPPEGSETMPYIDESPTMSPQLSARSQGGGDSISPTPPEGLAPGVE) is disordered. A compositionally biased stretch (polar residues) spans 54–64 (PTMSPQLSARS). Position 57 is a phosphoserine (serine 57). One can recognise a DH domain in the interval 91–284 (MRKLVLSGFL…QNFLSSINED (194 aa)). A PH domain is found at 301–459 (QLVKDGFLVE…WREAIQKLQK (159 aa)). Residues 484 to 613 (TVHNIPVTSN…ETKNWHTDVI (130 aa)) enclose the C2 domain. Positions 647–845 (VKISVVTKRE…YYLQHPPISF (199 aa)) constitute a Rho-GAP domain.

In terms of assembly, interacts with DLG4.

Its subcellular location is the cell projection. The protein localises to the dendritic spine. It is found in the axon. The protein resides in the synapse. Functionally, protein with a unique structure having two opposing regulatory activities toward small GTP-binding proteins. The C-terminus is a GTPase-activating protein domain which stimulates GTP hydrolysis by RAC1, RAC2 and CDC42. Accelerates the intrinsic rate of GTP hydrolysis of RAC1 or CDC42, leading to down-regulation of the active GTP-bound form. The central Dbl homology (DH) domain functions as guanine nucleotide exchange factor (GEF) that modulates the GTPases CDC42, RHOA and RAC1. Promotes the conversion of CDC42, RHOA and RAC1 from the GDP-bound to the GTP-bound form. Functions as an important negative regulator of neuronal RAC1 activity. Regulates macrophage functions such as CSF1-directed motility and phagocytosis through the modulation of RAC1 activity. The protein is Active breakpoint cluster region-related protein (ABR) of Bos taurus (Bovine).